Consider the following 205-residue polypeptide: NADH-quinone oxidoreductase subunit I (205 aa).

4Fe-4S ferredoxin-type domains lie at 75–104 (RLLE…METS) and 114–143 (HEYT…HGGR). [4Fe-4S] cluster contacts are provided by C84, C87, C90, C94, C123, C126, C129, and C133.

Belongs to the complex I 23 kDa subunit family. As to quaternary structure, NDH-1 is composed of 14 different subunits. Subunits NuoA, H, J, K, L, M, N constitute the membrane sector of the complex. Requires [4Fe-4S] cluster as cofactor.

The protein resides in the cell inner membrane. It carries out the reaction a quinone + NADH + 5 H(+)(in) = a quinol + NAD(+) + 4 H(+)(out). In terms of biological role, NDH-1 shuttles electrons from NADH, via FMN and iron-sulfur (Fe-S) centers, to quinones in the respiratory chain. The immediate electron acceptor for the enzyme in this species is believed to be ubiquinone. Couples the redox reaction to proton translocation (for every two electrons transferred, four hydrogen ions are translocated across the cytoplasmic membrane), and thus conserves the redox energy in a proton gradient. The polypeptide is NADH-quinone oxidoreductase subunit I (Wolinella succinogenes (strain ATCC 29543 / DSM 1740 / CCUG 13145 / JCM 31913 / LMG 7466 / NCTC 11488 / FDC 602W) (Vibrio succinogenes)).